A 275-amino-acid chain; its full sequence is NH(3)-dependent NAD(+) synthetase (275 aa).

46 to 53 contacts ATP; that stretch reads GISGGQDS. Residue Asp52 participates in Mg(2+) binding. Arg140 serves as a coordination point for deamido-NAD(+). Residue Thr160 participates in ATP binding. Glu165 contributes to the Mg(2+) binding site. The deamido-NAD(+) site is built by Lys173 and Asp180. ATP-binding residues include Lys189 and Thr211. Residue 260–261 coordinates deamido-NAD(+); sequence HK.

It belongs to the NAD synthetase family. Homodimer.

It carries out the reaction deamido-NAD(+) + NH4(+) + ATP = AMP + diphosphate + NAD(+) + H(+). It participates in cofactor biosynthesis; NAD(+) biosynthesis; NAD(+) from deamido-NAD(+) (ammonia route): step 1/1. Catalyzes the ATP-dependent amidation of deamido-NAD to form NAD. Uses ammonia as a nitrogen source. The polypeptide is NH(3)-dependent NAD(+) synthetase (Salmonella agona (strain SL483)).